Consider the following 394-residue polypeptide: Exodeoxyribonuclease 7 large subunit (394 aa).

It belongs to the XseA family. As to quaternary structure, heterooligomer composed of large and small subunits.

The protein localises to the cytoplasm. It carries out the reaction Exonucleolytic cleavage in either 5'- to 3'- or 3'- to 5'-direction to yield nucleoside 5'-phosphates.. Functionally, bidirectionally degrades single-stranded DNA into large acid-insoluble oligonucleotides, which are then degraded further into small acid-soluble oligonucleotides. This chain is Exodeoxyribonuclease 7 large subunit, found in Thermotoga sp. (strain RQ2).